The chain runs to 994 residues: Translocase of chloroplast 108, chloroplastic (994 aa).

Disordered stretches follow at residues 14 to 61 (KEAS…EDEP), 84 to 124 (TTDL…DPSV), and 152 to 287 (AVDG…DETR). 2 stretches are compositionally biased toward polar residues: residues 37–53 (GETTVVTTSISEGANES) and 84–98 (TTDLEKVSSTPTPSN). The span at 99 to 121 (AEKESPEATEVRIVEEGKLEKAD) shows a compositional bias: basic and acidic residues. A compositionally biased stretch (acidic residues) spans 166–197 (NDGDTDANTADEDNENDEDDVDEDEDEDDADM). Polar residues predominate over residues 249 to 268 (ASDSPGRNTQRPNGALSTQI). The span at 269–280 (TSTTDESASSDA) shows a compositional bias: low complexity. The region spanning 360–589 (DFACTILVLG…KLQETTAPGR (230 aa)) is the AIG1-type G domain. Residues 369 to 376 (GKTGVGKS) are G1. 372–377 (GVGKSS) contacts GTP. A Mg(2+)-binding site is contributed by Ser-376. The G2 stretch occupies residues 395–399 (PSTNK). Residues 416–419 (DTPG) form a G3 region. Residues 488 to 491 (THAS) are G4. Residues His-489 and 537–538 (EN) each bind GTP. A G5 region spans residues 537–539 (ENH). Disordered stretches follow at residues 616-659 (LPDE…EDLT) and 691-716 (EAKKRQAQMSKEELAEAEEAEDEAGN). Acidic residues predominate over residues 620-643 (QAGESDESDDDEEEEDSDADDYDE). Residues 650 to 659 (LSKEELEDLT) show a composition bias toward basic and acidic residues. Residues 705-714 (AEAEEAEDEA) show a composition bias toward acidic residues. The chain crosses the membrane as a helical span at residues 969–989 (MVLIGIVPILRSLINCRFGFG).

It belongs to the TRAFAC class TrmE-Era-EngA-EngB-Septin-like GTPase superfamily. AIG1/Toc34/Toc159-like paraseptin GTPase family. TOC159 subfamily. As to quaternary structure, part of the TOC core complex. The cofactor is Mg(2+).

Its subcellular location is the plastid. It is found in the chloroplast outer membrane. GTPase involved in protein precursor import into chloroplasts. Seems to recognize chloroplast-destined precursor proteins and regulate their presentation to the translocation channel through GTP hydrolysis. Probably specialized in the import of nuclear encoded non-photosynthetic preproteins from the cytoplasm to the chloroplast. This Physcomitrium patens (Spreading-leaved earth moss) protein is Translocase of chloroplast 108, chloroplastic.